We begin with the raw amino-acid sequence, 477 residues long: Glycogen synthase (477 aa).

Lys-15 serves as a coordination point for ADP-alpha-D-glucose.

The protein belongs to the glycosyltransferase 1 family. Bacterial/plant glycogen synthase subfamily.

The enzyme catalyses [(1-&gt;4)-alpha-D-glucosyl](n) + ADP-alpha-D-glucose = [(1-&gt;4)-alpha-D-glucosyl](n+1) + ADP + H(+). It participates in glycan biosynthesis; glycogen biosynthesis. Synthesizes alpha-1,4-glucan chains using ADP-glucose. The sequence is that of Glycogen synthase from Erwinia tasmaniensis (strain DSM 17950 / CFBP 7177 / CIP 109463 / NCPPB 4357 / Et1/99).